The primary structure comprises 408 residues: Imidazolonepropionase (408 aa).

The Fe(3+) site is built by histidine 73 and histidine 75. 2 residues coordinate Zn(2+): histidine 73 and histidine 75. Arginine 82, tyrosine 145, and histidine 178 together coordinate 4-imidazolone-5-propanoate. Tyrosine 145 contacts N-formimidoyl-L-glutamate. Histidine 243 contacts Fe(3+). Histidine 243 provides a ligand contact to Zn(2+). Position 246 (glutamine 246) interacts with 4-imidazolone-5-propanoate. Position 318 (aspartate 318) interacts with Fe(3+). A Zn(2+)-binding site is contributed by aspartate 318. The N-formimidoyl-L-glutamate site is built by asparagine 320 and glycine 322. Serine 323 is a 4-imidazolone-5-propanoate binding site.

It belongs to the metallo-dependent hydrolases superfamily. HutI family. Zn(2+) is required as a cofactor. Requires Fe(3+) as cofactor.

It localises to the cytoplasm. The enzyme catalyses 4-imidazolone-5-propanoate + H2O = N-formimidoyl-L-glutamate. It functions in the pathway amino-acid degradation; L-histidine degradation into L-glutamate; N-formimidoyl-L-glutamate from L-histidine: step 3/3. Its function is as follows. Catalyzes the hydrolytic cleavage of the carbon-nitrogen bond in imidazolone-5-propanoate to yield N-formimidoyl-L-glutamate. It is the third step in the universal histidine degradation pathway. The protein is Imidazolonepropionase of Shewanella piezotolerans (strain WP3 / JCM 13877).